The primary structure comprises 372 residues: Beta sliding clamp (372 aa).

It belongs to the beta sliding clamp family. Forms a ring-shaped head-to-tail homodimer around DNA which binds and tethers DNA polymerases and other proteins to the DNA. The DNA replisome complex has a single clamp-loading complex (3 tau and 1 each of delta, delta', psi and chi subunits) which binds 3 Pol III cores (1 core on the leading strand and 2 on the lagging strand) each with a beta sliding clamp dimer. Additional proteins in the replisome are other copies of gamma, psi and chi, Ssb, DNA helicase and RNA primase.

It is found in the cytoplasm. Its function is as follows. Confers DNA tethering and processivity to DNA polymerases and other proteins. Acts as a clamp, forming a ring around DNA (a reaction catalyzed by the clamp-loading complex) which diffuses in an ATP-independent manner freely and bidirectionally along dsDNA. Initially characterized for its ability to contact the catalytic subunit of DNA polymerase III (Pol III), a complex, multichain enzyme responsible for most of the replicative synthesis in bacteria; Pol III exhibits 3'-5' exonuclease proofreading activity. The beta chain is required for initiation of replication as well as for processivity of DNA replication. The protein is Beta sliding clamp (dnaN) of Caulobacter vibrioides (strain ATCC 19089 / CIP 103742 / CB 15) (Caulobacter crescentus).